We begin with the raw amino-acid sequence, 243 residues long: Ornithine decarboxylase antizyme 3 (243 aa).

Residues S6, S9, and S12 each carry the phosphoserine modification.

This sequence belongs to the ODC antizyme family. In terms of assembly, interacts with ODC1 and thereby sterically blocks ODC homodimerization. Interacts with AZIN2; this interaction disrupts the interaction between the antizyme and ODC1. Interacts with GGN. Isoform 2 interacts with PPP1R16A; Modulates PPP1CB activity. As to expression, testis-specific. Isoform 2 is expressed in outer dense fibers, fibrous sheath and the connecting piece of sperm.

Its subcellular location is the nucleus. The protein localises to the cytoplasm. The protein resides in the cell projection. It localises to the cilium. It is found in the flagellum. Functionally, ornithine decarboxylase (ODC) antizyme protein that negatively regulates ODC activity and intracellular polyamine biosynthesis and uptake in response to increased intracellular polyamine levels. Binds to ODC monomers, inhibiting the assembly of the functional ODC homodimers. Does not target the ODC monomers for degradation, which allows a protein synthesis-independent restoration of ODC activity. Stabilizes AZIN2 by interfering with its ubiquitination. Involved in the translocation of AZNI2 from ER-Golgi intermediate compartment (ERGIC) to the cytosol. Probably plays a key role in spermatogenesis by regulating the intracellular concentration of polyamines in haploid germ cells. Its function is as follows. Does not possess antizyme activity. Modulates PPP1CB activity through its interaction with PPP1R16A. The polypeptide is Ornithine decarboxylase antizyme 3 (Rattus norvegicus (Rat)).